Consider the following 457-residue polypeptide: Exodeoxyribonuclease 7 large subunit (457 aa).

The protein belongs to the XseA family. Heterooligomer composed of large and small subunits.

The protein localises to the cytoplasm. It carries out the reaction Exonucleolytic cleavage in either 5'- to 3'- or 3'- to 5'-direction to yield nucleoside 5'-phosphates.. Functionally, bidirectionally degrades single-stranded DNA into large acid-insoluble oligonucleotides, which are then degraded further into small acid-soluble oligonucleotides. In Cronobacter sakazakii (strain ATCC BAA-894) (Enterobacter sakazakii), this protein is Exodeoxyribonuclease 7 large subunit.